The primary structure comprises 469 residues: Tubulin gamma-1 chain (469 aa).

142 to 148 (AGGTGSG) contributes to the GTP binding site.

It belongs to the tubulin family.

The protein resides in the cytoplasm. It is found in the cytoskeleton. Its subcellular location is the microtubule organizing center. Its function is as follows. Tubulin is the major constituent of microtubules. The gamma chain is found at microtubule organizing centers (MTOC) such as the spindle poles, suggesting that it is involved in the minus-end nucleation of microtubule assembly. This chain is Tubulin gamma-1 chain (TUBG1), found in Zea mays (Maize).